The following is a 123-amino-acid chain: Modulator protein MzrA (123 aa).

The Cytoplasmic segment spans residues 1 to 8 (MIKRPRWQ). Residues 9–29 (YVLLIALALLALATLLVPCMV) form a helical membrane-spanning segment. Residues 30 to 123 (RTESELRIRA…EFARAPLNLG (94 aa)) lie on the Periplasmic side of the membrane.

It belongs to the MzrA family. Interacts with EnvZ.

It is found in the cell inner membrane. Its function is as follows. Modulates the activity of the EnvZ/OmpR two-component regulatory system, probably by directly modulating EnvZ enzymatic activity and increasing stability of phosphorylated OmpR. The protein is Modulator protein MzrA of Serratia proteamaculans (strain 568).